The chain runs to 255 residues: 5'-nucleotidase SurE (255 aa).

Positions 8, 9, 39, and 91 each coordinate a divalent metal cation.

The protein belongs to the SurE nucleotidase family. A divalent metal cation is required as a cofactor.

Its subcellular location is the cytoplasm. The catalysed reaction is a ribonucleoside 5'-phosphate + H2O = a ribonucleoside + phosphate. Nucleotidase that shows phosphatase activity on nucleoside 5'-monophosphates. This Acinetobacter baumannii (strain ATCC 17978 / DSM 105126 / CIP 53.77 / LMG 1025 / NCDC KC755 / 5377) protein is 5'-nucleotidase SurE.